Here is an 89-residue protein sequence, read N- to C-terminus: Small ribosomal subunit protein uS15 (89 aa).

Belongs to the universal ribosomal protein uS15 family. As to quaternary structure, part of the 30S ribosomal subunit. Forms a bridge to the 50S subunit in the 70S ribosome, contacting the 23S rRNA.

Functionally, one of the primary rRNA binding proteins, it binds directly to 16S rRNA where it helps nucleate assembly of the platform of the 30S subunit by binding and bridging several RNA helices of the 16S rRNA. Its function is as follows. Forms an intersubunit bridge (bridge B4) with the 23S rRNA of the 50S subunit in the ribosome. The polypeptide is Small ribosomal subunit protein uS15 (Levilactobacillus brevis (strain ATCC 367 / BCRC 12310 / CIP 105137 / JCM 1170 / LMG 11437 / NCIMB 947 / NCTC 947) (Lactobacillus brevis)).